A 145-amino-acid polypeptide reads, in one-letter code: Small ribosomal subunit protein uS19 (145 aa).

Ala-2 bears the N-acetylalanine mark. Lys-108 is covalently cross-linked (Glycyl lysine isopeptide (Lys-Gly) (interchain with G-Cter in SUMO2)).

It belongs to the universal ribosomal protein uS19 family. Component of the small ribosomal subunit.

It localises to the cytoplasm. Functionally, component of the small ribosomal subunit. The ribosome is a large ribonucleoprotein complex responsible for the synthesis of proteins in the cell. The protein is Small ribosomal subunit protein uS19 (RPS15) of Bos taurus (Bovine).